An 87-amino-acid polypeptide reads, in one-letter code: MAHHKSALKRIKQNKRKQFRNKSIRSGLRTFIKNVREAVEAKDAAKAKEALQAAIPVIDKAATKGIIHANAASRNVSRLTKLVNTLG.

Positions 1 to 22 (MAHHKSALKRIKQNKRKQFRNK) are disordered.

The protein belongs to the bacterial ribosomal protein bS20 family.

In terms of biological role, binds directly to 16S ribosomal RNA. The polypeptide is Small ribosomal subunit protein bS20 (Geobacter metallireducens (strain ATCC 53774 / DSM 7210 / GS-15)).